We begin with the raw amino-acid sequence, 202 residues long: NAD(P)H-quinone oxidoreductase chain 6 (202 aa).

5 helical membrane-spanning segments follow: residues 9–29, 32–52, 61–81, 98–118, and 144–164; these read VVSFGILATMLIGTALGVVLA, IVYSAFLLGGVFISIAGMYLL, AQVLVYVGAVNVLILFAIMLV, VLTAIVSVGLFALLSTMVLAT, and FLLPFELASVLLLMAMVGAII.

The protein belongs to the complex I subunit 6 family.

Its subcellular location is the membrane. The enzyme catalyses a plastoquinone + NADH + (n+1) H(+)(in) = a plastoquinol + NAD(+) + n H(+)(out). It carries out the reaction a plastoquinone + NADPH + (n+1) H(+)(in) = a plastoquinol + NADP(+) + n H(+)(out). Its function is as follows. NDH-1 shuttles electrons from NAD(P)H, via FMN and iron-sulfur (Fe-S) centers, to quinones in the respiratory chain. The immediate electron acceptor for the enzyme in this species is believed to be plastoquinone. Couples the redox reaction to proton translocation (for every two electrons transferred, four hydrogen ions are translocated across the cytoplasmic membrane), and thus conserves the redox energy in a proton gradient. In Nostoc sp. (strain PCC 7120 / SAG 25.82 / UTEX 2576), this protein is NAD(P)H-quinone oxidoreductase chain 6 (ndhG).